Here is a 166-residue protein sequence, read N- to C-terminus: Replication gene B protein (166 aa).

In terms of biological role, required for lagging strand synthesis. Might interact with the host dnaB protein. This chain is Replication gene B protein (B), found in Escherichia phage P2 (Bacteriophage P2).